Consider the following 743-residue polypeptide: Phosphoribosylformylglycinamidine synthase subunit PurL (743 aa).

H53 is an active-site residue. ATP is bound by residues Y56 and K95. Residue E97 participates in Mg(2+) binding. Substrate-binding positions include 98–101 (SHNH) and R120. The active-site Proton acceptor is H99. Mg(2+) is bound at residue D121. Q245 contributes to the substrate binding site. D275 provides a ligand contact to Mg(2+). Substrate is bound at residue 319–321 (ESQ). D502 and G539 together coordinate ATP. N540 serves as a coordination point for Mg(2+). S542 lines the substrate pocket.

Belongs to the FGAMS family. Monomer. Part of the FGAM synthase complex composed of 1 PurL, 1 PurQ and 2 PurS subunits.

The protein resides in the cytoplasm. It catalyses the reaction N(2)-formyl-N(1)-(5-phospho-beta-D-ribosyl)glycinamide + L-glutamine + ATP + H2O = 2-formamido-N(1)-(5-O-phospho-beta-D-ribosyl)acetamidine + L-glutamate + ADP + phosphate + H(+). It functions in the pathway purine metabolism; IMP biosynthesis via de novo pathway; 5-amino-1-(5-phospho-D-ribosyl)imidazole from N(2)-formyl-N(1)-(5-phospho-D-ribosyl)glycinamide: step 1/2. In terms of biological role, part of the phosphoribosylformylglycinamidine synthase complex involved in the purines biosynthetic pathway. Catalyzes the ATP-dependent conversion of formylglycinamide ribonucleotide (FGAR) and glutamine to yield formylglycinamidine ribonucleotide (FGAM) and glutamate. The FGAM synthase complex is composed of three subunits. PurQ produces an ammonia molecule by converting glutamine to glutamate. PurL transfers the ammonia molecule to FGAR to form FGAM in an ATP-dependent manner. PurS interacts with PurQ and PurL and is thought to assist in the transfer of the ammonia molecule from PurQ to PurL. The chain is Phosphoribosylformylglycinamidine synthase subunit PurL from Lactobacillus helveticus (strain DPC 4571).